The chain runs to 75 residues: Small ribosomal subunit protein bS18c (75 aa).

The segment covering 1 to 12 has biased composition (basic residues); it reads MNKSKRSFRRRL. Residues 1 to 21 form a disordered region; the sequence is MNKSKRSFRRRLPPIGSRDQI.

This sequence belongs to the bacterial ribosomal protein bS18 family. Part of the 30S ribosomal subunit.

Its subcellular location is the plastid. The protein resides in the chloroplast. The polypeptide is Small ribosomal subunit protein bS18c (Cycas taitungensis (Prince sago)).